Consider the following 542-residue polypeptide: Chaperonin GroEL (542 aa).

ATP is bound by residues 29-32, 86-90, Gly-413, and Asp-493; these read TLGP and DGTTT.

This sequence belongs to the chaperonin (HSP60) family. As to quaternary structure, forms a cylinder of 14 subunits composed of two heptameric rings stacked back-to-back. Interacts with the co-chaperonin GroES.

Its subcellular location is the cytoplasm. The enzyme catalyses ATP + H2O + a folded polypeptide = ADP + phosphate + an unfolded polypeptide.. Functionally, together with its co-chaperonin GroES, plays an essential role in assisting protein folding. The GroEL-GroES system forms a nano-cage that allows encapsulation of the non-native substrate proteins and provides a physical environment optimized to promote and accelerate protein folding. This chain is Chaperonin GroEL, found in Elusimicrobium minutum (strain Pei191).